Here is a 353-residue protein sequence, read N- to C-terminus: 26S proteasome non-ATPase regulatory subunit 8 (353 aa).

Positions 1 to 25 (MFIKGRAAKTPRGEPRRSSRGGRKL) are disordered. The PCI domain occupies 165–334 (PSFERYMAQL…QQKPEDSTIP (170 aa)). A Glycyl lysine isopeptide (Lys-Gly) (interchain with G-Cter in SUMO2) cross-link involves residue K300.

Belongs to the proteasome subunit S14 family. In terms of assembly, component of the 19S proteasome regulatory particle complex. The 26S proteasome consists of a 20S core particle (CP) and two 19S regulatory subunits (RP). The regulatory particle is made of a lid composed of 9 subunits including PSMD8, a base containing 6 ATPases and few additional components. Interacts with DDI2. Interacts with TASOR. In terms of tissue distribution, expressed in the Sertoli cells of the testis.

In terms of biological role, component of the 26S proteasome, a multiprotein complex involved in the ATP-dependent degradation of ubiquitinated proteins. This complex plays a key role in the maintenance of protein homeostasis by removing misfolded or damaged proteins, which could impair cellular functions, and by removing proteins whose functions are no longer required. Therefore, the proteasome participates in numerous cellular processes, including cell cycle progression, apoptosis, or DNA damage repair. The polypeptide is 26S proteasome non-ATPase regulatory subunit 8 (Psmd8) (Mus musculus (Mouse)).